The sequence spans 357 residues: Protein MGF 360-14L (357 aa).

This sequence belongs to the asfivirus MGF 360 family. As to quaternary structure, interacts with host IRF3 and TRIM21; these interactions mediates degradation of IRF3 through TRIM21 and ubiquitin-meditated proteolysis.

It localises to the host cytoplasm. In terms of biological role, plays a role in virus cell tropism, and may be required for efficient virus replication in macrophages. Also inhibits the host cGAS/STING-mediated type I interferon production by inducing host IRF3 degradation through the proteasome pathway. The chain is Protein MGF 360-14L from Ornithodoros (relapsing fever ticks).